The following is a 396-amino-acid chain: Elongation factor Tu (396 aa).

Positions K10–E206 constitute a tr-type G domain. Positions G19 to T26 are G1. Residue G19–T26 coordinates GTP. Residue T26 coordinates Mg(2+). Positions G60–N64 are G2. Positions D81–G84 are G3. Residues D81–H85 and N136–D139 contribute to the GTP site. Residues N136–D139 are G4. Positions S174–L176 are G5.

Belongs to the TRAFAC class translation factor GTPase superfamily. Classic translation factor GTPase family. EF-Tu/EF-1A subfamily. As to quaternary structure, monomer.

It localises to the cytoplasm. It catalyses the reaction GTP + H2O = GDP + phosphate + H(+). Functionally, GTP hydrolase that promotes the GTP-dependent binding of aminoacyl-tRNA to the A-site of ribosomes during protein biosynthesis. The sequence is that of Elongation factor Tu from Acinetobacter baylyi (strain ATCC 33305 / BD413 / ADP1).